A 444-amino-acid polypeptide reads, in one-letter code: MVKDEITTTKYLIHSQINAKGFVEKPDVVGAIFGQTEGLLSDSLDLRELQKTGRIGRIKVDMTNRSGRTKGEIIIPSSLDRIETTILAASLETINRVGPCEANLRVTKIEDVRAVKRRTIVERAKELYQNMMEEFTPESSRMIDEVKESIRRPEIIEYGEDNLPAGPNTPTSDAILIVEGRSDVLNLLKYGIKNTIAVEGVNVPKTVADLTKKRTVTAFLDGDRGGDLILKELLQIGDIDYVTRAPRGLEVEYLDKDQVIYALKNKTSVDKITSHANYNHNQHRYHNKPKSHDKFESKLHEVTSSVNKTDKYSQKNESKQFKQQKNENKQVKDNSKEKTQKSTEKHNETEETHLNKYELMLKELSGTGKGRLYDMDFNLLKEVKVSDIYNEVKNSKETIKNIVFDGIITQRIVDLSKEKNIECLVAVKMSEVVKKPETIKIITK.

Residues 173–250 form the Toprim domain; sequence DAILIVEGRS…YVTRAPRGLE (78 aa). Mg(2+) is bound by residues E179, D221, and D223. The interval 302 to 354 is disordered; the sequence is VTSSVNKTDKYSQKNESKQFKQQKNENKQVKDNSKEKTQKSTEKHNETEETHL. Over residues 308–354 the composition is skewed to basic and acidic residues; that stretch reads KTDKYSQKNESKQFKQQKNENKQVKDNSKEKTQKSTEKHNETEETHL.

This sequence belongs to the archaeal DnaG primase family. In terms of assembly, forms a ternary complex with MCM helicase and DNA. Component of the archaeal exosome complex. The cofactor is Mg(2+).

The enzyme catalyses ssDNA + n NTP = ssDNA/pppN(pN)n-1 hybrid + (n-1) diphosphate.. Its function is as follows. RNA polymerase that catalyzes the synthesis of short RNA molecules used as primers for DNA polymerase during DNA replication. Also part of the exosome, which is a complex involved in RNA degradation. Acts as a poly(A)-binding protein that enhances the interaction between heteromeric, adenine-rich transcripts and the exosome. In Methanosphaera stadtmanae (strain ATCC 43021 / DSM 3091 / JCM 11832 / MCB-3), this protein is DNA primase DnaG.